A 166-amino-acid polypeptide reads, in one-letter code: Myosin regulatory light chain 2, ventricular/cardiac muscle isoform (166 aa).

Ala-2 carries the n,N,N-trimethylalanine modification. Asn-14 carries the post-translational modification Deamidated asparagine. Ser-15 carries the post-translational modification Phosphoserine; by ZIPK/DAPK3. A Phosphoserine modification is found at Ser-19. EF-hand domains follow at residues 24 to 59 (TQIQEFKEAFTIMDQNRDGFIDKNDLRDTFAALGRV), 94 to 129 (DPEETILNAFKVFDPEGKGVLKADYVREMLTTQAER), and 130 to 165 (FSKEEVDQMFAAFPPDVTGNLDYKNLVHIITHGEEK). Positions 37, 39, 41, and 48 each coordinate Ca(2+). Thr-52 carries the phosphothreonine modification.

Myosin is a hexamer of 2 heavy chains and 4 light chains. Interacts with MYOC. In terms of processing, N-terminus is methylated by METTL11A/NTM1. Post-translationally, phosphorylated by MYLK3 and MYLK2; promotes cardiac muscle contraction and function. Dephosphorylated by PPP1CB complexed to PPP1R12B. The phosphorylated form in adult is expressed as gradients across the heart from endocardium (low phosphorylation) to epicardium (high phosphorylation); regulates cardiac torsion and workload distribution. As to expression, highly expressed in type I muscle fibers.

It localises to the cytoplasm. The protein localises to the myofibril. It is found in the sarcomere. Its subcellular location is the a band. Its function is as follows. Contractile protein that plays a role in heart development and function. Following phosphorylation, plays a role in cross-bridge cycling kinetics and cardiac muscle contraction by increasing myosin lever arm stiffness and promoting myosin head diffusion; as a consequence of the increase in maximum contraction force and calcium sensitivity of contraction force. These events altogether slow down myosin kinetics and prolong duty cycle resulting in accumulated myosins being cooperatively recruited to actin binding sites to sustain thin filament activation as a means to fine-tune myofilament calcium sensitivity to force. During cardiogenesis plays an early role in cardiac contractility by promoting cardiac myofibril assembly. This chain is Myosin regulatory light chain 2, ventricular/cardiac muscle isoform, found in Homo sapiens (Human).